The sequence spans 360 residues: Biotin synthase (360 aa).

Residues 1–25 (MQHAPLNFVPDAAKVPPTPGQSPNA) form a disordered region. One can recognise a Radical SAM core domain in the interval 58–285 (NAVQLSTLLS…KAMVRLSAGR (228 aa)). Residues Cys-73, Cys-77, and Cys-80 each contribute to the [4Fe-4S] cluster site. Cys-117, Cys-148, Cys-208, and Arg-280 together coordinate [2Fe-2S] cluster. The disordered stretch occupies residues 340–360 (QAEGAQHSHSSHCHIDITPAD).

The protein belongs to the radical SAM superfamily. Biotin synthase family. Homodimer. [4Fe-4S] cluster is required as a cofactor. [2Fe-2S] cluster serves as cofactor.

It catalyses the reaction (4R,5S)-dethiobiotin + (sulfur carrier)-SH + 2 reduced [2Fe-2S]-[ferredoxin] + 2 S-adenosyl-L-methionine = (sulfur carrier)-H + biotin + 2 5'-deoxyadenosine + 2 L-methionine + 2 oxidized [2Fe-2S]-[ferredoxin]. It participates in cofactor biosynthesis; biotin biosynthesis; biotin from 7,8-diaminononanoate: step 2/2. Catalyzes the conversion of dethiobiotin (DTB) to biotin by the insertion of a sulfur atom into dethiobiotin via a radical-based mechanism. This chain is Biotin synthase, found in Ralstonia nicotianae (strain ATCC BAA-1114 / GMI1000) (Ralstonia solanacearum).